The chain runs to 120 residues: NAD(P)H-quinone oxidoreductase subunit 3 (120 aa).

3 consecutive transmembrane segments (helical) span residues 11–31 (LIFL…SYLI), 64–84 (MFAL…PWAV), and 89–109 (LGLL…VALV).

The protein belongs to the complex I subunit 3 family. As to quaternary structure, NDH-1 can be composed of about 15 different subunits; different subcomplexes with different compositions have been identified which probably have different functions.

The protein localises to the cell inner membrane. The enzyme catalyses a plastoquinone + NADH + (n+1) H(+)(in) = a plastoquinol + NAD(+) + n H(+)(out). The catalysed reaction is a plastoquinone + NADPH + (n+1) H(+)(in) = a plastoquinol + NADP(+) + n H(+)(out). NDH-1 shuttles electrons from an unknown electron donor, via FMN and iron-sulfur (Fe-S) centers, to quinones in the respiratory and/or the photosynthetic chain. The immediate electron acceptor for the enzyme in this species is believed to be plastoquinone. Couples the redox reaction to proton translocation, and thus conserves the redox energy in a proton gradient. Cyanobacterial NDH-1 also plays a role in inorganic carbon-concentration. The chain is NAD(P)H-quinone oxidoreductase subunit 3 from Gloeobacter violaceus (strain ATCC 29082 / PCC 7421).